Reading from the N-terminus, the 307-residue chain is Ubiquitin recognition factor in ER-associated degradation protein 1 (307 aa).

Position 1 is an N-acetylmethionine (M1). Phosphoserine is present on residues S129, S231, S245, S247, and S299. 2 disordered regions span residues 230 to 255 (GSGNRLDGKKKGVEPSPSPIKPGDIK) and 282 to 307 (EEDEAGGRFVAFSGEGQSLRKKGRKP).

Belongs to the UFD1 family. Interacts with USP13. Heterodimer with NPLOC4, this heterodimer binds VCP and inhibits Golgi membrane fusion. Interacts with ZFAND2B; probably through VCP.

The protein localises to the nucleus. Its subcellular location is the cytoplasm. The protein resides in the cytosol. It functions in the pathway protein degradation; proteasomal ubiquitin-dependent pathway. Its function is as follows. Essential component of the ubiquitin-dependent proteolytic pathway which degrades ubiquitin fusion proteins. The ternary complex containing UFD1, VCP and NPLOC4 binds ubiquitinated proteins and is necessary for the export of misfolded proteins from the ER to the cytoplasm, where they are degraded by the proteasome. The NPLOC4-UFD1-VCP complex regulates spindle disassembly at the end of mitosis and is necessary for the formation of a closed nuclear envelope. It may be involved in the development of some ectoderm-derived structures. Acts as a negative regulator of type I interferon production via the complex formed with VCP and NPLOC4, which binds to RIGI and recruits RNF125 to promote ubiquitination and degradation of RIGI. This is Ubiquitin recognition factor in ER-associated degradation protein 1 from Rattus norvegicus (Rat).